Reading from the N-terminus, the 434-residue chain is Enolase (434 aa).

Q163 is a binding site for (2R)-2-phosphoglycerate. E205 serves as the catalytic Proton donor. Mg(2+)-binding residues include D242, E291, and D318. (2R)-2-phosphoglycerate contacts are provided by K343, R372, S373, and K394. Residue K343 is the Proton acceptor of the active site.

This sequence belongs to the enolase family. Requires Mg(2+) as cofactor.

Its subcellular location is the cytoplasm. The protein localises to the secreted. It localises to the cell surface. It catalyses the reaction (2R)-2-phosphoglycerate = phosphoenolpyruvate + H2O. It functions in the pathway carbohydrate degradation; glycolysis; pyruvate from D-glyceraldehyde 3-phosphate: step 4/5. Its function is as follows. Catalyzes the reversible conversion of 2-phosphoglycerate (2-PG) into phosphoenolpyruvate (PEP). It is essential for the degradation of carbohydrates via glycolysis. This Streptococcus sanguinis (strain SK36) protein is Enolase.